Reading from the N-terminus, the 337-residue chain is Transmembrane protein 120B (337 aa).

Residues 1–39 (MSLERCQSEWTEIEQEYQQLQETHKVYRQKLEELTNLQA) are a coiled coil. A run of 6 helical transmembrane segments spans residues 100–122 (GLYL…AKFA), 130–150 (FKLY…FLLN), 157–175 (IFNF…RESI), 185–205 (GWWV…LTWP), 268–288 (FLLP…VTLF), and 300–320 (QVFM…LTTL).

It belongs to the TMEM120 family.

Its subcellular location is the nucleus inner membrane. Its function is as follows. Necessary for efficient adipogenesis. Does not show ion channel activity. The chain is Transmembrane protein 120B (tmem120b) from Danio rerio (Zebrafish).